An 884-amino-acid polypeptide reads, in one-letter code: Protein P (884 aa).

A terminal protein domain (TP) region spans residues 1–184; the sequence is MHPFSRLFRN…GKPYSWEHRQ (184 aa). The tract at residues 185–387 is spacer; the sequence is LVQHNGQQHK…YCIHHIVSSL (203 aa). The tract at residues 299-345 is disordered; that stretch reads RNSGHTTWFSSASNSNKSRSREKAYSSNSTSKRYSPPLNYEKSDFSS. Residues 388 to 729 are polymerase/reverse transcriptase domain (RT); that stretch reads DDWGPCTVTG…YEELWPVVRQ (342 aa). The Reverse transcriptase domain maps to 398 to 639; sequence DVTIKSPRTP…NHLHFMGYVI (242 aa). Mg(2+) is bound by residues D470, D590, and D591.

It belongs to the hepadnaviridae P protein family.

The catalysed reaction is DNA(n) + a 2'-deoxyribonucleoside 5'-triphosphate = DNA(n+1) + diphosphate. It catalyses the reaction Endonucleolytic cleavage to 5'-phosphomonoester.. Activated by host HSP70 and HSP40 in vitro to be able to bind the epsilon loop of the pgRNA. Because deletion of the RNase H region renders the protein partly chaperone-independent, the chaperones may be needed indirectly to relieve occlusion of the RNA-binding site by this domain. Inhibited by several reverse-transcriptase inhibitors: Lamivudine, Adefovir and Entecavir. In terms of biological role, multifunctional enzyme that converts the viral RNA genome into dsDNA in viral cytoplasmic capsids. This enzyme displays a DNA polymerase activity that can copy either DNA or RNA templates, and a ribonuclease H (RNase H) activity that cleaves the RNA strand of RNA-DNA heteroduplexes in a partially processive 3'- to 5'-endonucleasic mode. Neo-synthesized pregenomic RNA (pgRNA) are encapsidated together with the P protein, and reverse-transcribed inside the nucleocapsid. Initiation of reverse-transcription occurs first by binding the epsilon loop on the pgRNA genome, and is initiated by protein priming, thereby the 5'-end of (-)DNA is covalently linked to P protein. Partial (+)DNA is synthesized from the (-)DNA template and generates the relaxed circular DNA (RC-DNA) genome. After budding and infection, the RC-DNA migrates in the nucleus, and is converted into a plasmid-like covalently closed circular DNA (cccDNA). The activity of P protein does not seem to be necessary for cccDNA generation, and is presumably released from (+)DNA by host nuclear DNA repair machinery. This Woodchuck hepatitis B virus (isolate 7) (WHV) protein is Protein P.